The following is a 206-amino-acid chain: Small ribosomal subunit protein uS4 (206 aa).

The S4 RNA-binding domain maps to 96–156 (TRLDNVVYRM…EKSRTQARIK (61 aa)).

The protein belongs to the universal ribosomal protein uS4 family. Part of the 30S ribosomal subunit. Contacts protein S5. The interaction surface between S4 and S5 is involved in control of translational fidelity.

One of the primary rRNA binding proteins, it binds directly to 16S rRNA where it nucleates assembly of the body of the 30S subunit. In terms of biological role, with S5 and S12 plays an important role in translational accuracy. The chain is Small ribosomal subunit protein uS4 from Shewanella baltica (strain OS223).